We begin with the raw amino-acid sequence, 219 residues long: 2-hydroxy-3-keto-5-methylthiopentenyl-1-phosphate phosphatase (219 aa).

Belongs to the HAD-like hydrolase superfamily. MtnX family.

It catalyses the reaction 2-hydroxy-5-methylsulfanyl-3-oxopent-1-enyl phosphate + H2O = 1,2-dihydroxy-5-(methylsulfanyl)pent-1-en-3-one + phosphate. It functions in the pathway amino-acid biosynthesis; L-methionine biosynthesis via salvage pathway; L-methionine from S-methyl-5-thio-alpha-D-ribose 1-phosphate: step 4/6. In terms of biological role, dephosphorylates 2-hydroxy-3-keto-5-methylthiopentenyl-1-phosphate (HK-MTPenyl-1-P) yielding 1,2-dihydroxy-3-keto-5-methylthiopentene (DHK-MTPene). The polypeptide is 2-hydroxy-3-keto-5-methylthiopentenyl-1-phosphate phosphatase (Bacillus cereus (strain ATCC 10987 / NRS 248)).